The chain runs to 434 residues: Serine/threonine-protein kinase Sgk1-B (434 aa).

The disordered stretch occupies residues 68–94 (ESELLNENSSPPPSHSQQINLGPSSNP). The Protein kinase domain occupies 101-358 (FQFLKIIGKG…FMEIKNHIFF (258 aa)). Residues 107 to 115 (IGKGSFGKV) and lysine 130 contribute to the ATP site. Aspartate 225 serves as the catalytic Proton acceptor. One can recognise an AGC-kinase C-terminal domain in the interval 359–434 (SPIDWDDLIN…SYAPPMDSYL (76 aa)).

Belongs to the protein kinase superfamily. AGC Ser/Thr protein kinase family.

It is found in the cytoplasm. The protein resides in the nucleus. Its subcellular location is the endoplasmic reticulum. It carries out the reaction L-seryl-[protein] + ATP = O-phospho-L-seryl-[protein] + ADP + H(+). The enzyme catalyses L-threonyl-[protein] + ATP = O-phospho-L-threonyl-[protein] + ADP + H(+). Its function is as follows. Protein kinase that may play an important role in cellular stress response. Plays an important role in activating certain potassium, sodium, and chloride channels, suggesting an involvement in the regulation of processes such as cell survival, neuronal excitability and renal sodium excretion. The sequence is that of Serine/threonine-protein kinase Sgk1-B (sgk1-b) from Xenopus laevis (African clawed frog).